The sequence spans 500 residues: Cytochrome P450 monooxygenase 103 (500 aa).

2 consecutive transmembrane segments (helical) span residues 1–21 (MASTPLLYVLVIILSAVYLLR) and 26–46 (PLYAIPAVGPSLPLLSYIGAL). The N-linked (GlcNAc...) asparagine glycan is linked to asparagine 374. Position 441 (cysteine 441) interacts with heme.

This sequence belongs to the cytochrome P450 family. The cofactor is heme.

The protein localises to the membrane. Its pathway is secondary metabolite biosynthesis. Cytochrome P450 monooxygenase that is able to use testosterone as a substrate for oxidation. This Postia placenta (strain ATCC 44394 / Madison 698-R) (Brown rot fungus) protein is Cytochrome P450 monooxygenase 103.